Consider the following 127-residue polypeptide: Ribosome-binding factor A (127 aa).

Belongs to the RbfA family. As to quaternary structure, monomer. Binds 30S ribosomal subunits, but not 50S ribosomal subunits or 70S ribosomes.

It is found in the cytoplasm. In terms of biological role, one of several proteins that assist in the late maturation steps of the functional core of the 30S ribosomal subunit. Associates with free 30S ribosomal subunits (but not with 30S subunits that are part of 70S ribosomes or polysomes). Required for efficient processing of 16S rRNA. May interact with the 5'-terminal helix region of 16S rRNA. This chain is Ribosome-binding factor A, found in Actinobacillus pleuropneumoniae serotype 7 (strain AP76).